The primary structure comprises 283 residues: CASP-like protein 4A3 (283 aa).

The segment at 1–86 (MRSPAKTMPS…VEETPSPIVV (86 aa)) is disordered. The Cytoplasmic segment spans residues 1–135 (MRSPAKTMPS…SRREEVVKFS (135 aa)). Low complexity predominate over residues 9–20 (PSMSPSSVSTEK). Residues 50–79 (SLDHSSESEKEDAKSKPESRRNKNPGKVEE) are compositionally biased toward basic and acidic residues. Residues 136-156 (ALGFRLSEVVLALISFSIMAA) form a helical membrane-spanning segment. Residues 157–174 (DKTKGWSGDSFDRYKEYR) are Extracellular-facing. The helical transmembrane segment at 175–195 (FCLSVNVVAFVYSSFQACDLA) threads the bilayer. Topologically, residues 196 to 212 (YHLVKEKHLISHHLRPL) are cytoplasmic. A helical membrane pass occupies residues 213–233 (FEFIIDQVLAYLLMSASTAAV). Residues 234-251 (TRVDDWVSNWGKDEFTEM) lie on the Extracellular side of the membrane. Residues 252–272 (ASASIAMSFLAFLAFAFSSLI) form a helical membrane-spanning segment. The Cytoplasmic portion of the chain corresponds to 273 to 283 (SGYNLFNQGSL).

The protein belongs to the Casparian strip membrane proteins (CASP) family. Homodimer and heterodimers.

It localises to the cell membrane. In Arabidopsis thaliana (Mouse-ear cress), this protein is CASP-like protein 4A3.